The following is a 158-amino-acid chain: Urease accessory protein UreE (158 aa).

This sequence belongs to the UreE family.

It is found in the cytoplasm. Involved in urease metallocenter assembly. Binds nickel. Probably functions as a nickel donor during metallocenter assembly. This is Urease accessory protein UreE from Klebsiella pneumoniae subsp. pneumoniae (strain ATCC 700721 / MGH 78578).